We begin with the raw amino-acid sequence, 155 residues long: Small ribosomal subunit protein uS7cz/uS7cy (155 aa).

Belongs to the universal ribosomal protein uS7 family. In terms of assembly, part of the 30S ribosomal subunit.

Its subcellular location is the plastid. In terms of biological role, one of the primary rRNA binding proteins, it binds directly to 16S rRNA where it nucleates assembly of the head domain of the 30S subunit. The chain is Small ribosomal subunit protein uS7cz/uS7cy (rps7-A) from Cuscuta obtusiflora (Peruvian dodder).